We begin with the raw amino-acid sequence, 305 residues long: Oxidoreductase OpS7 (305 aa).

The protein belongs to the oxidoreductase OpS7 family.

It functions in the pathway secondary metabolite biosynthesis. Its function is as follows. Oxidoreductase; part of the gene cluster that mediates the biosynthesis of the bibenzoquinone oosporein, a metabolite required for fungal virulence that acts by evading host immunity to facilitate fungal multiplication in insects. The non-reducing polyketide synthase OpS1 produces orsellinic acid by condensing acetyl-CoA with 3 malonyl-CoA units. Orsellinic acid is then hydroxylated to benzenetriol by the hydroxylase OpS4. The intermediate is oxidized either nonenzymatically to 5,5'-dideoxy-oosporein or enzymatically to benzenetetrol by the oxidoreductase OpS7. The latter is further dimerized to oosporein by the catalase OpS5. OpS6 probably functions en route for protecting cells against oxidative stress by scavenging any leaked free radical form of benzenetetrol by activating the thiol group of glutathione. The protein is Oxidoreductase OpS7 of Beauveria bassiana (strain ARSEF 2860) (White muscardine disease fungus).